The sequence spans 226 residues: Phosphoglycolate phosphatase (226 aa).

Catalysis depends on Asp-9, which acts as the Nucleophile. Mg(2+)-binding residues include Asp-9 and Asp-11. Residue Lys-150 participates in substrate binding. Mg(2+) contacts are provided by Asp-173 and Asp-177.

The protein belongs to the archaeal SPP-like hydrolase family. The cofactor is Mg(2+).

The enzyme catalyses 2-phosphoglycolate + H2O = glycolate + phosphate. Functionally, catalyzes the dephosphorylation of 2-phosphoglycolate. The chain is Phosphoglycolate phosphatase from Methanosarcina acetivorans (strain ATCC 35395 / DSM 2834 / JCM 12185 / C2A).